The following is a 248-amino-acid chain: Protein UL24 homolog (248 aa).

A disordered region spans residues 194-248; it reads DRPRPTAQGHRPRTHVGPKPSQLTARVPRSARAGRAGGRKGQVGAVGQVCPGAQK. Positions 218–227 are enriched in low complexity; the sequence is ARVPRSARAG.

This sequence belongs to the herpesviridae UL24 family.

The protein localises to the virion. Its subcellular location is the host cytoplasm. It localises to the host nucleus. It is found in the host nucleolus. The protein resides in the host Golgi apparatus. Its function is as follows. May participate in nuclear egress of viral particles. Plays a role in the dispersal of several host nucleolar proteins including NCL/nucleolin and NPM1. Since deletion of host NCL/nucleolin negatively impact on nuclear egress, UL24 supposedly acts on this process through its effect on host nucleoli. In Homo sapiens (Human), this protein is Protein UL24 homolog.